The sequence spans 331 residues: ADP-L-glycero-D-manno-heptose-6-epimerase (331 aa).

Residues Phe-11 to Ile-12, Asp-32 to Asn-33, Lys-39, Lys-54, Leu-75 to Thr-79, and Asn-92 contribute to the NADP(+) site. Catalysis depends on Tyr-139, which acts as the Proton acceptor. Position 143 (Lys-143) interacts with NADP(+). Position 168 (Asn-168) interacts with substrate. NADP(+) contacts are provided by Val-169 and Lys-177. Lys-177 functions as the Proton acceptor in the catalytic mechanism. Substrate-binding positions include Arg-179, Gln-186, Phe-200–His-203, His-213, and Tyr-292.

This sequence belongs to the NAD(P)-dependent epimerase/dehydratase family. HldD subfamily. As to quaternary structure, homopentamer. It depends on NADP(+) as a cofactor.

It carries out the reaction ADP-D-glycero-beta-D-manno-heptose = ADP-L-glycero-beta-D-manno-heptose. The protein operates within nucleotide-sugar biosynthesis; ADP-L-glycero-beta-D-manno-heptose biosynthesis; ADP-L-glycero-beta-D-manno-heptose from D-glycero-beta-D-manno-heptose 7-phosphate: step 4/4. Functionally, catalyzes the interconversion between ADP-D-glycero-beta-D-manno-heptose and ADP-L-glycero-beta-D-manno-heptose via an epimerization at carbon 6 of the heptose. The sequence is that of ADP-L-glycero-D-manno-heptose-6-epimerase from Cupriavidus pinatubonensis (strain JMP 134 / LMG 1197) (Cupriavidus necator (strain JMP 134)).